Consider the following 56-residue polypeptide: Large ribosomal subunit protein bL32 (56 aa).

The disordered stretch occupies residues 1–56 (MAVQQNRKTRSKRGMRRSHDALSAPTLSQDKETGTTHRRHHVAPDGFYRGRKVVDV). Positions 7–16 (RKTRSKRGMR) are enriched in basic residues.

This sequence belongs to the bacterial ribosomal protein bL32 family.

In Chromohalobacter salexigens (strain ATCC BAA-138 / DSM 3043 / CIP 106854 / NCIMB 13768 / 1H11), this protein is Large ribosomal subunit protein bL32.